The sequence spans 160 residues: Large ribosomal subunit protein uL10 (160 aa).

The protein belongs to the universal ribosomal protein uL10 family. As to quaternary structure, part of the ribosomal stalk of the 50S ribosomal subunit. The N-terminus interacts with L11 and the large rRNA to form the base of the stalk. The C-terminus forms an elongated spine to which L12 dimers bind in a sequential fashion forming a multimeric L10(L12)X complex.

In terms of biological role, forms part of the ribosomal stalk, playing a central role in the interaction of the ribosome with GTP-bound translation factors. The chain is Large ribosomal subunit protein uL10 from Wolinella succinogenes (strain ATCC 29543 / DSM 1740 / CCUG 13145 / JCM 31913 / LMG 7466 / NCTC 11488 / FDC 602W) (Vibrio succinogenes).